The chain runs to 61 residues: Large ribosomal subunit protein uL30 (61 aa).

Residues 1–20 (MSQKKVTVRQVGSPIGRKPE) form a disordered region.

This sequence belongs to the universal ribosomal protein uL30 family. In terms of assembly, part of the 50S ribosomal subunit.

This Hyphomonas neptunium (strain ATCC 15444) protein is Large ribosomal subunit protein uL30.